We begin with the raw amino-acid sequence, 36 residues long: Photosystem I reaction center subunit VIII (36 aa).

Residues 8 to 28 (SFFVPLVCLVFPAIAMAFLFV) form a helical membrane-spanning segment.

The protein belongs to the PsaI family.

It is found in the plastid. The protein resides in the chloroplast thylakoid membrane. In terms of biological role, may help in the organization of the PsaL subunit. This Chara vulgaris (Common stonewort) protein is Photosystem I reaction center subunit VIII.